The following is an 88-amino-acid chain: Apolipoprotein C-I (88 aa).

Residues 1-26 (MRLFIALPVLIVVVAMALEGPAPAQA) form the signal peptide.

The protein belongs to the apolipoprotein C1 family.

Its subcellular location is the secreted. Functionally, inhibitor of lipoprotein binding to the low density lipoprotein (LDL) receptor, LDL receptor-related protein, and very low density lipoprotein (VLDL) receptor. Associates with high density lipoproteins (HDL) and the triacylglycerol-rich lipoproteins in the plasma and makes up about 10% of the protein of the VLDL and 2% of that of HDL. Appears to interfere directly with fatty acid uptake and is also the major plasma inhibitor of cholesteryl ester transfer protein (CETP). Binds free fatty acids and reduces their intracellular esterification. Modulates the interaction of APOE with beta-migrating VLDL and inhibits binding of beta-VLDL to the LDL receptor-related protein. In Rattus norvegicus (Rat), this protein is Apolipoprotein C-I (Apoc1).